Consider the following 149-residue polypeptide: Secreted RxLR effector protein 3 (149 aa).

An N-terminal signal peptide occupies residues 1–23 (MRASTILFVLGAAILAVIGVTTA). The RxLR-dEER signature appears at 38–53 (RLLRSGSMEQEPDEER).

Belongs to the RxLR effector family.

It localises to the secreted. Its subcellular location is the host nucleus. It is found in the host cytoplasm. Functionally, secreted effector that completely suppresses the host cell death induced by cell death-inducing proteins. This Plasmopara viticola (Downy mildew of grapevine) protein is Secreted RxLR effector protein 3.